Reading from the N-terminus, the 613-residue chain is Chaperone protein DnaK (613 aa).

At T173 the chain carries Phosphothreonine; by autocatalysis. Positions 577-613 (AKQAQAQQEGGAEGAQKADDNVVDAEYEEVNDDQEKK) are disordered. Residues 597–613 (NVVDAEYEEVNDDQEKK) show a composition bias toward acidic residues.

Belongs to the heat shock protein 70 family.

Acts as a chaperone. The polypeptide is Chaperone protein DnaK (Bacillus pumilus (strain SAFR-032)).